The chain runs to 119 residues: uncharacterized protein (119 aa).

This is an uncharacterized protein from Methanocaldococcus jannaschii (strain ATCC 43067 / DSM 2661 / JAL-1 / JCM 10045 / NBRC 100440) (Methanococcus jannaschii).